The sequence spans 396 residues: Nucleolar protein 12 (396 aa).

The segment at 43-104 (TDKDADGDEK…GKESKKSTKE (62 aa)) is disordered. Acidic residues predominate over residues 47-58 (ADGDEKMEDAAS). Positions 64–73 (KKPSKKKLAK) are enriched in basic residues. Over residues 87–104 (EPEKLVEEGKESKKSTKE) the composition is skewed to basic and acidic residues. RRM domains follow at residues 112–220 (RTIF…SITH) and 228–312 (RSVF…RCKN). The tract at residues 361 to 396 (TKDDSKPVLKKGKKERSKTGRVTKRSQAFKKSQQKK) is disordered. The span at 368–396 (VLKKGKKERSKTGRVTKRSQAFKKSQQKK) shows a compositional bias: basic residues.

This sequence belongs to the RRM RBM34 family.

Its subcellular location is the nucleus. The protein localises to the nucleolus. Its function is as follows. Involved in pre-25S rRNA processing. The chain is Nucleolar protein 12 (NOP12) from Candida glabrata (strain ATCC 2001 / BCRC 20586 / JCM 3761 / NBRC 0622 / NRRL Y-65 / CBS 138) (Yeast).